A 319-amino-acid chain; its full sequence is tRNA U34 carboxymethyltransferase (319 aa).

Residues lysine 88, tryptophan 102, lysine 107, glycine 126, leucine 176–glutamate 177, methionine 192, tyrosine 196, and arginine 311 each bind carboxy-S-adenosyl-L-methionine.

This sequence belongs to the class I-like SAM-binding methyltransferase superfamily. CmoB family. In terms of assembly, homotetramer.

The catalysed reaction is carboxy-S-adenosyl-L-methionine + 5-hydroxyuridine(34) in tRNA = 5-carboxymethoxyuridine(34) in tRNA + S-adenosyl-L-homocysteine + H(+). In terms of biological role, catalyzes carboxymethyl transfer from carboxy-S-adenosyl-L-methionine (Cx-SAM) to 5-hydroxyuridine (ho5U) to form 5-carboxymethoxyuridine (cmo5U) at position 34 in tRNAs. This chain is tRNA U34 carboxymethyltransferase, found in Pseudomonas syringae pv. syringae (strain B728a).